The primary structure comprises 205 residues: MSAIAPGMILIAYLCGSISSAILVCRLCGLPDPRTSGSGNPGATNVLRIGGKGAAVAVLIFDVLKGMLPVWGAYELGVSPFWLGLIAIAACLGHIWPVFFGFKGGKGVATAFGAIAPISWDLTGVMAGTWLLTVLLSGYSSLGAIVSALIAPFYVWWFKPQFTFPVSMLSCLILLRHHDNIQRLWRRQETKIWTKFKRKREKDPE.

The Periplasmic segment spans residues 1–3 (MSA). A helical transmembrane segment spans residues 4–24 (IAPGMILIAYLCGSISSAILV). The Cytoplasmic portion of the chain corresponds to 25–52 (CRLCGLPDPRTSGSGNPGATNVLRIGGK). A helical transmembrane segment spans residues 53 to 73 (GAAVAVLIFDVLKGMLPVWGA). Residues 74 to 80 (YELGVSP) lie on the Periplasmic side of the membrane. A helical membrane pass occupies residues 81 to 101 (FWLGLIAIAACLGHIWPVFFG). The Cytoplasmic segment spans residues 102-111 (FKGGKGVATA). Residues 112–132 (FGAIAPISWDLTGVMAGTWLL) form a helical membrane-spanning segment. The Periplasmic segment spans residues 133–137 (TVLLS). Residues 138 to 158 (GYSSLGAIVSALIAPFYVWWF) form a helical membrane-spanning segment. Residues 159–205 (KPQFTFPVSMLSCLILLRHHDNIQRLWRRQETKIWTKFKRKREKDPE) are Cytoplasmic-facing.

It belongs to the PlsY family. In terms of assembly, probably interacts with PlsX.

The protein resides in the cell inner membrane. The catalysed reaction is sn-glycerol 3-phosphate + an acyl-CoA = a 1-acyl-sn-glycero-3-phosphate + CoA. The enzyme catalyses a fatty acyl-[ACP] + sn-glycerol 3-phosphate = a 1-acyl-sn-glycero-3-phosphate + holo-[ACP]. It participates in lipid metabolism; phospholipid metabolism. Its function is as follows. Catalyzes the transfer of an acyl group from acyl-ACP to glycerol-3-phosphate (G3P) to form lysophosphatidic acid (LPA). This enzyme can also utilize acyl-CoA as fatty acyl donor, but not acyl-PO(4). The chain is Glycerol-3-phosphate acyltransferase from Shigella flexneri serotype 5b (strain 8401).